Reading from the N-terminus, the 165-residue chain is Large ribosomal subunit protein uL10 (165 aa).

The protein belongs to the universal ribosomal protein uL10 family. In terms of assembly, part of the ribosomal stalk of the 50S ribosomal subunit. The N-terminus interacts with L11 and the large rRNA to form the base of the stalk. The C-terminus forms an elongated spine to which L12 dimers bind in a sequential fashion forming a multimeric L10(L12)X complex.

In terms of biological role, forms part of the ribosomal stalk, playing a central role in the interaction of the ribosome with GTP-bound translation factors. This is Large ribosomal subunit protein uL10 from Paraburkholderia phymatum (strain DSM 17167 / CIP 108236 / LMG 21445 / STM815) (Burkholderia phymatum).